The chain runs to 658 residues: Serine/threonine-protein kinase shk1/pak1 (658 aa).

Disordered stretches follow at residues 1–21 (MERG…ITPI), 39–104 (RKLK…SYDE), 126–147 (GGSS…STVI), and 213–365 (GAKP…QQSN). Polar residues predominate over residues 66–98 (PLSQSRTTVSRVSLGSRQHSSSSIRKLQTNVSD). Over residues 129–140 (SPTSSYGSGSAS) the composition is skewed to low complexity. The region spanning 147 to 160 (ISSPFDPKHVTHVG) is the CRIB domain. Composition is skewed to low complexity over residues 226–254 (PLLS…LYPS) and 262–272 (ASSSSSPLLSS). The span at 273 to 300 (QTVKTTTSNASRQPSPLVSSKSTDNIIR) shows a compositional bias: polar residues. 2 positions are modified to phosphoserine: Ser301 and Ser303. In terms of domain architecture, Protein kinase spans 386–637 (YRNFVKIGQG…SGELLRHPFL (252 aa)). Residues 392–400 (IGQGASGDV) and Lys415 contribute to the ATP site. The active-site Proton acceptor is the Asp505.

It belongs to the protein kinase superfamily. STE Ser/Thr protein kinase family. STE20 subfamily. Forms an activated complex with GTP-bound ras-like cdc42. Interacts with skb1 and the SH3 domain of skb5 via its amino-terminal regulatory domain. Skb1, cdc42 and shk1 are able to form a ternary complex in vivo. Interacts with rga8 and may interact with byr2. In terms of processing, autophosphorylated on serine residues.

The protein resides in the cytoplasm. Its subcellular location is the cytoskeleton. The protein localises to the spindle. It catalyses the reaction L-seryl-[protein] + ATP = O-phospho-L-seryl-[protein] + ADP + H(+). The catalysed reaction is L-threonyl-[protein] + ATP = O-phospho-L-threonyl-[protein] + ADP + H(+). MAP4K component of the MAPK pathway required for the mating pheromone response. Phosphorylates histone H2B to form H2BS10ph. Phosphorylates tea1. Required for skb1-dependent mitotic inhibitory function. Regulates microtubule dynamics and cell polarity. The protein is Serine/threonine-protein kinase shk1/pak1 (shk1) of Schizosaccharomyces pombe (strain 972 / ATCC 24843) (Fission yeast).